Reading from the N-terminus, the 196-residue chain is Endonuclease V (196 aa).

Mg(2+) is bound by residues Asp-37 and Asp-98.

The protein belongs to the endonuclease V family. The cofactor is Mg(2+).

The protein localises to the cytoplasm. It carries out the reaction Endonucleolytic cleavage at apurinic or apyrimidinic sites to products with a 5'-phosphate.. In terms of biological role, DNA repair enzyme involved in the repair of deaminated bases. Selectively cleaves double-stranded DNA at the second phosphodiester bond 3' to a deoxyinosine leaving behind the intact lesion on the nicked DNA. The chain is Endonuclease V from Sulfolobus acidocaldarius (strain ATCC 33909 / DSM 639 / JCM 8929 / NBRC 15157 / NCIMB 11770).